A 603-amino-acid polypeptide reads, in one-letter code: Beta-hexosaminidase (603 aa).

The signal sequence occupies residues 1–19 (MAYFRLYAVLLAVASSVAA). Catalysis depends on charge relay system residues D225, H278, and E349. C293 and C354 are oxidised to a cystine. A glycan (N-linked (GlcNAc...) asparagine) is linked at N356. An intrachain disulfide couples C451 to C486. N-linked (GlcNAc...) asparagine glycosylation is found at N503 and N528. An intrachain disulfide couples C586 to C593.

It belongs to the glycosyl hydrolase 20 family. Homodimer.

It is found in the secreted. It carries out the reaction Hydrolysis of terminal non-reducing N-acetyl-D-hexosamine residues in N-acetyl-beta-D-hexosaminides.. Functionally, part of the binary chitinolytic system. Involved in hydrolysis of chitobiose and higher chito-oligomers (produced from cell wall chitin by endochitinases), thus contributing to the formation of germ tubes, fruit-bodies and septa during hyphenation. Hydrolyzes synthetic substrates p-nitrophenyl-beta-N-acetyl-glucosamine (pNP-beta-GlcNAc), p-nitrophenyl-beta-N-acetyl-galactosamine (pNP-beta-GalNAc) and 5-bromo-4-chloro-3-indoyl-beta-D-N-glucosaminide (X-GlcNAc). In Emericella nidulans (Aspergillus nidulans), this protein is Beta-hexosaminidase.